A 657-amino-acid polypeptide reads, in one-letter code: tRNA 5-methylaminomethyl-2-thiouridine biosynthesis bifunctional protein MnmC (657 aa).

The tract at residues 1-233 (MPRGLILATP…KRDMTVAAFP (233 aa)) is tRNA (mnm(5)s(2)U34)-methyltransferase. Residues 256-657 (LGAGLAGCSV…RALRHGKHAA (402 aa)) are FAD-dependent cmnm(5)s(2)U34 oxidoreductase.

The protein in the N-terminal section; belongs to the methyltransferase superfamily. tRNA (mnm(5)s(2)U34)-methyltransferase family. In the C-terminal section; belongs to the DAO family. Requires FAD as cofactor.

The protein localises to the cytoplasm. The enzyme catalyses 5-aminomethyl-2-thiouridine(34) in tRNA + S-adenosyl-L-methionine = 5-methylaminomethyl-2-thiouridine(34) in tRNA + S-adenosyl-L-homocysteine + H(+). Functionally, catalyzes the last two steps in the biosynthesis of 5-methylaminomethyl-2-thiouridine (mnm(5)s(2)U) at the wobble position (U34) in tRNA. Catalyzes the FAD-dependent demodification of cmnm(5)s(2)U34 to nm(5)s(2)U34, followed by the transfer of a methyl group from S-adenosyl-L-methionine to nm(5)s(2)U34, to form mnm(5)s(2)U34. The sequence is that of tRNA 5-methylaminomethyl-2-thiouridine biosynthesis bifunctional protein MnmC from Ralstonia nicotianae (strain ATCC BAA-1114 / GMI1000) (Ralstonia solanacearum).